A 300-amino-acid chain; its full sequence is uncharacterized protein (300 aa).

A divalent metal cation is bound by residues Glu-146, Glu-148, and Asp-177.

Belongs to the FAH family.

This is an uncharacterized protein from Staphylococcus aureus (strain MW2).